The primary structure comprises 113 residues: UPF0482 protein YnfB (113 aa).

The first 28 residues, M1–A28, serve as a signal peptide directing secretion.

This sequence belongs to the UPF0482 family.

In Shigella flexneri serotype 5b (strain 8401), this protein is UPF0482 protein YnfB.